A 151-amino-acid chain; its full sequence is 3-hydroxyacyl-[acyl-carrier-protein] dehydratase FabZ (151 aa).

His-58 is an active-site residue.

This sequence belongs to the thioester dehydratase family. FabZ subfamily.

It is found in the cytoplasm. The catalysed reaction is a (3R)-hydroxyacyl-[ACP] = a (2E)-enoyl-[ACP] + H2O. In terms of biological role, involved in unsaturated fatty acids biosynthesis. Catalyzes the dehydration of short chain beta-hydroxyacyl-ACPs and long chain saturated and unsaturated beta-hydroxyacyl-ACPs. The protein is 3-hydroxyacyl-[acyl-carrier-protein] dehydratase FabZ of Histophilus somni (strain 129Pt) (Haemophilus somnus).